A 172-amino-acid chain; its full sequence is Folate transporter FolT (172 aa).

Helical transmembrane passes span 6 to 26 (VMIY…FLSI), 35 to 55 (FGFI…AGIV), 71 to 91 (AYFP…GVFF), 101 to 121 (VLLA…TIWL), and 131 to 151 (VLFV…AIVI).

Forms a stable energy-coupling factor (ECF) transporter complex composed of a membrane-embedded substrate-binding protein (S component), two ATP-binding proteins (A components) and a transmembrane protein (T component).

The protein localises to the cell membrane. In terms of biological role, folate-binding protein that interacts with the energy-coupling factor (ECF) ABC-transporter complex. Unlike classic ABC transporters this ECF transporter provides the energy necessary to transport a number of different substrates. The substrates themselves are bound by transmembrane, not extracytoplasmic soluble proteins. This chain is Folate transporter FolT (folT), found in Clostridium novyi (strain NT).